The following is a 344-amino-acid chain: tRNA N6-adenosine threonylcarbamoyltransferase (344 aa).

Residues His111 and His115 each contribute to the Fe cation site. Substrate contacts are provided by residues 133 to 137 (LVSGG), Asp166, Gly179, and Asn283. Asp311 contributes to the Fe cation binding site.

It belongs to the KAE1 / TsaD family. The cofactor is Fe(2+).

Its subcellular location is the cytoplasm. It carries out the reaction L-threonylcarbamoyladenylate + adenosine(37) in tRNA = N(6)-L-threonylcarbamoyladenosine(37) in tRNA + AMP + H(+). Its function is as follows. Required for the formation of a threonylcarbamoyl group on adenosine at position 37 (t(6)A37) in tRNAs that read codons beginning with adenine. Is involved in the transfer of the threonylcarbamoyl moiety of threonylcarbamoyl-AMP (TC-AMP) to the N6 group of A37, together with TsaE and TsaB. TsaD likely plays a direct catalytic role in this reaction. The polypeptide is tRNA N6-adenosine threonylcarbamoyltransferase (Orientia tsutsugamushi (strain Ikeda) (Rickettsia tsutsugamushi)).